Here is a 655-residue protein sequence, read N- to C-terminus: SRSF protein kinase 1 (655 aa).

The tract at residues 1–57 is disordered; that stretch reads MERKVLALQARKKRTKAKKDKAQRKPETQHRGSAPHSESDLPEQEEEILGSDDDEQE. Over residues 10-22 the composition is skewed to basic residues; the sequence is ARKKRTKAKKDKA. Residues 40–57 are compositionally biased toward acidic residues; that stretch reads DLPEQEEEILGSDDDEQE. S51 carries the post-translational modification Phosphoserine; by CK2. Residues 80-653 form the Protein kinase domain; that stretch reads YHVIRKLGWG…AAECLRHPWL (574 aa). ATP contacts are provided by residues 86 to 94 and K109; that span reads LGWGHFSTV. D213 acts as the Proton acceptor in catalysis. Disordered regions lie at residues 238–341 and 397–417; these read WQRS…QDQT and FLSS…CTPI. A compositionally biased stretch (basic residues) spans 265 to 276; it reads KNKKKKLKKKQK. 2 stretches are compositionally biased toward basic and acidic residues: residues 277–288 and 304–318; these read RQAELLEKRMQE and NKQE…RPLK. 3 positions are modified to phosphoserine: S309, S311, and S333. Residue S555 is modified to Phosphoserine; by CK2.

The protein belongs to the protein kinase superfamily. CMGC Ser/Thr protein kinase family. Monomer. Found in a multisubunit complex containing seven proteins, named toposome, which separates entangled circular chromatin DNA during chromosome segregation. Interacts with HHV-1 ICP27 protein. Interacts with DNAJC8 and AHSA1/AHA1 and this mediates formation of a complex with the Hsp70 /Hsp90 machinery. Binds to IGF2BP1, SYNCRIP, HNRNPA2B1 and HNRNPC. Interacts with SAFB/SAFB1 and SAFB2 which inhibits its activity. The cofactor is Mg(2+).

It is found in the cytoplasm. The protein localises to the nucleus. The protein resides in the nucleoplasm. Its subcellular location is the nucleus matrix. It localises to the microsome. It is found in the nucleus speckle. The protein localises to the chromosome. The enzyme catalyses L-seryl-[protein] + ATP = O-phospho-L-seryl-[protein] + ADP + H(+). It carries out the reaction L-threonyl-[protein] + ATP = O-phospho-L-threonyl-[protein] + ADP + H(+). With respect to regulation, activated by phosphorylation on Ser-51 and Ser-555. In terms of biological role, serine/arginine-rich protein-specific kinase which specifically phosphorylates its substrates at serine residues located in regions rich in arginine/serine dipeptides, known as RS domains and is involved in the phosphorylation of SR splicing factors and the regulation of splicing. Plays a central role in the regulatory network for splicing, controlling the intranuclear distribution of splicing factors in interphase cells and the reorganization of nuclear speckles during mitosis. Can influence additional steps of mRNA maturation, as well as other cellular activities, such as chromatin reorganization in somatic and sperm cells and cell cycle progression. Phosphorylates SFRS2, ZRSR2, LBR and PRM1. Phosphorylates SRSF1 using a directional (C-terminal to N-terminal) and a dual-track mechanism incorporating both processive phosphorylation (in which the kinase stays attached to the substrate after each round of phosphorylation) and distributive phosphorylation steps (in which the kinase and substrate dissociate after each phosphorylation event). The RS domain of SRSF1 binds first to a docking groove in the large lobe of the kinase domain of SRPK1. This induces certain structural changes in SRPK1 and/or RRM2 domain of SRSF1, allowing RRM2 to bind the kinase and initiate phosphorylation. The cycles continue for several phosphorylation steps in a processive manner (steps 1-8) until the last few phosphorylation steps (approximately steps 9-12). During that time, a mechanical stress induces the unfolding of the beta-4 motif in RRM2, which then docks at the docking groove of SRPK1. This also signals RRM2 to begin to dissociate, which facilitates SRSF1 dissociation after phosphorylation is completed. Can mediate hepatitis B virus (HBV) core protein phosphorylation. It plays a negative role in the regulation of HBV replication through a mechanism not involving the phosphorylation of the core protein but by reducing the packaging efficiency of the pregenomic RNA (pgRNA) without affecting the formation of the viral core particles. Can induce splicing of exon 10 in MAPT/TAU. The protein is SRSF protein kinase 1 of Pongo abelii (Sumatran orangutan).